The primary structure comprises 153 residues: Biogenesis of lysosome-related organelles complex 1 subunit 1 (153 aa).

Basic and acidic residues predominate over residues 1–11 (MAPGSRGERSS). The tract at residues 1–27 (MAPGSRGERSSFRSRRGPGVPSPQPDV) is disordered. Positions 27–59 (VTMLSRLLKEHQAKQNERKELQEKRRREAITAA) form a coiled coil.

This sequence belongs to the BLOC1S1 family. As to quaternary structure, component of the biogenesis of lysosome-related organelles complex 1 (BLOC-1) composed of BLOC1S1, BLOC1S2, BLOC1S3, BLOC1S4, BLOC1S5, BLOC1S6, DTNBP1/BLOC1S7 and SNAPIN/BLOC1S8. Octamer composed of one copy each BLOC1S1, BLOC1S2, BLOC1S3, BLOC1S4, BLOC1S5, BLOC1S6, DTNBP1/BLOC1S7 and SNAPIN/BLOC1S8. The BLOC-1 complex associates with the AP-3 protein complex and membrane protein cargos. Component of the BLOC-one-related complex (BORC) which is composed of BLOC1S1, BLOC1S2, BORCS5, BORCS6, BORCS7, BORCS8, KXD1 and SNAPIN. Interacts with ATP5F1A and NDUFA9; involved in their acetylation on lysine residues. Interacts with KXD1.

It localises to the mitochondrion intermembrane space. Its subcellular location is the mitochondrion matrix. It is found in the cytoplasm. The protein localises to the cytosol. The protein resides in the lysosome membrane. The catalysed reaction is L-lysyl-[protein] + acetyl-CoA = N(6)-acetyl-L-lysyl-[protein] + CoA + H(+). Its function is as follows. Component of the BLOC-1 complex, a complex that is required for normal biogenesis of lysosome-related organelles (LRO), such as platelet dense granules and melanosomes. In concert with the AP-3 complex, the BLOC-1 complex is required to target membrane protein cargos into vesicles assembled at cell bodies for delivery into neurites and nerve terminals. The BLOC-1 complex, in association with SNARE proteins, is also proposed to be involved in neurite extension. As part of the BORC complex may play a role in lysosomes movement and localization at the cell periphery. Associated with the cytosolic face of lysosomes, the BORC complex may recruit ARL8B and couple lysosomes to microtubule plus-end-directed kinesin motor. Functionally, acts as a protein acetyltransferase. Negatively regulates aerobic respiration through mitochondrial protein lysine-acetylation. May counteract the action of the deacetylase SIRT3 by acetylating and regulating proteins of the mitochondrial respiratory chain including ATP5F1A and NDUFA9. Acts as a regulator of mTORC2 signaling in response to hypotoxic stress by mediating acetylation of RICTOR, thereby protecting RICTOR against ubiquitination and subsequent degradation by the proteasome. This is Biogenesis of lysosome-related organelles complex 1 subunit 1 (BLOC1S1) from Homo sapiens (Human).